Here is a 455-residue protein sequence, read N- to C-terminus: UDP-N-acetylmuramoylalanine--D-glutamate ligase (455 aa).

117–123 (GSAGKTT) lines the ATP pocket.

This sequence belongs to the MurCDEF family.

It localises to the cytoplasm. It catalyses the reaction UDP-N-acetyl-alpha-D-muramoyl-L-alanine + D-glutamate + ATP = UDP-N-acetyl-alpha-D-muramoyl-L-alanyl-D-glutamate + ADP + phosphate + H(+). It functions in the pathway cell wall biogenesis; peptidoglycan biosynthesis. Cell wall formation. Catalyzes the addition of glutamate to the nucleotide precursor UDP-N-acetylmuramoyl-L-alanine (UMA). The chain is UDP-N-acetylmuramoylalanine--D-glutamate ligase from Symbiobacterium thermophilum (strain DSM 24528 / JCM 14929 / IAM 14863 / T).